A 125-amino-acid polypeptide reads, in one-letter code: Small ribosomal subunit protein uS13 (125 aa).

Residues 94-116 (GLPVRGQRTRTNARTRKGPRKAV) show a composition bias toward basic residues. The interval 94-125 (GLPVRGQRTRTNARTRKGPRKAVRASSAKAGR) is disordered.

Belongs to the universal ribosomal protein uS13 family. As to quaternary structure, part of the 30S ribosomal subunit. Forms a loose heterodimer with protein S19. Forms two bridges to the 50S subunit in the 70S ribosome.

Functionally, located at the top of the head of the 30S subunit, it contacts several helices of the 16S rRNA. In the 70S ribosome it contacts the 23S rRNA (bridge B1a) and protein L5 of the 50S subunit (bridge B1b), connecting the 2 subunits; these bridges are implicated in subunit movement. Contacts the tRNAs in the A and P-sites. This chain is Small ribosomal subunit protein uS13, found in Nitrosospira multiformis (strain ATCC 25196 / NCIMB 11849 / C 71).